A 230-amino-acid polypeptide reads, in one-letter code: Lecithin retinol acyltransferase (230 aa).

Over 1 to 194 the chain is Cytoplasmic; sequence MKNPMLEVVS…VKIIIRDQRS (194 aa). Residues 50-177 form the LRAT domain; the sequence is VLEVPRTHLT…CRYGTPISPQ (128 aa). Active-site residues include histidine 60 and histidine 72. Residue cysteine 161 is the Acyl-thioester intermediate of the active site. A helical membrane pass occupies residues 195-215; sequence VLASAVLGLASIVCTGLVSYT. Residues 216-230 are Lumenal-facing; sequence TLPAIFIPFFLWMAG.

The protein belongs to the H-rev107 family. In terms of tissue distribution, hepatic stellate cells and endothelial cells (at protein level). Found at high levels in testis and liver, followed by retinal pigment epithelium, small intestine, prostate, pancreas and colon. Low expression observed in brain. In fetal tissues, expressed in retinal pigment epithelium and liver, and barely in the brain.

The protein localises to the endoplasmic reticulum membrane. It is found in the rough endoplasmic reticulum. The protein resides in the endosome. Its subcellular location is the multivesicular body. It localises to the cytoplasm. The protein localises to the perinuclear region. The enzyme catalyses all-trans-retinol--[retinol-binding protein] + a 1,2-diacyl-sn-glycero-3-phosphocholine = apo--[retinol-binding protein] + an all-trans-retinyl ester + a 2-acyl-sn-glycero-3-phosphocholine. The catalysed reaction is 1,2-dihexadecanoyl-sn-glycero-3-phosphocholine + all-trans-retinol = all-trans-retinyl hexadecanoate + 2-hexadecanoyl-sn-glycero-3-phosphocholine. It carries out the reaction 1,2-diheptanoyl-sn-glycero-3-phosphocholine + all-trans-retinol--[retinol-binding protein] = all-trans-retinyl heptanoate + 2-heptanoyl-sn-glycero-3-phosphocholine + apo--[retinol-binding protein]. It catalyses the reaction 1,2-dioctanoyl-sn-glycero-3-phosphocholine + all-trans-retinol--[retinol-binding protein] = 2-octanoyl-sn-glycero-3-phosphocholine + all-trans-retinyl octanoate + apo--[retinol-binding protein]. The enzyme catalyses all-trans-retinol--[retinol-binding protein] + 1,2-dihexadecanoyl-sn-glycero-3-phosphocholine = apo--[retinol-binding protein] + all-trans-retinyl hexadecanoate + 2-hexadecanoyl-sn-glycero-3-phosphocholine. The catalysed reaction is 1,2-didodecanoyl-sn-glycero-3-phosphocholine + all-trans-retinol--[retinol-binding protein] = 2-dodecanoyl-sn-glycero-3-phosphocholine + all-trans-retinyl dodecanoate + apo--[retinol-binding protein]. The protein operates within cofactor metabolism; retinol metabolism. Its activity is regulated as follows. Inhibited by all-trans-retinyl alpha-bromoacetate and N-boc-L-biocytinyl-11-aminoundecane chloro-methyl ketone (BACMK). Functionally, transfers the acyl group from the sn-1 position of phosphatidylcholine to all-trans retinol, producing all-trans retinyl esters. Retinyl esters are storage forms of vitamin A. LRAT plays a critical role in vision. It provides the all-trans retinyl ester substrates for the isomerohydrolase which processes the esters into 11-cis-retinol in the retinal pigment epithelium; due to a membrane-associated alcohol dehydrogenase, 11 cis-retinol is oxidized and converted into 11-cis-retinaldehyde which is the chromophore for rhodopsin and the cone photopigments. Required for the survival of cone photoreceptors and correct rod photoreceptor cell morphology. In Homo sapiens (Human), this protein is Lecithin retinol acyltransferase.